The chain runs to 384 residues: Chaperone protein DnaJ (384 aa).

A J domain is found at 4–68 (DFYDVLGVSR…EKRQMYDQLG (65 aa)). Disordered regions lie at residues 74 to 105 (QAQKRGAGGGGGGRGQGNPFGGGGNPFGGMGG) and 113 to 132 (NNLFNGGGGQRRSRPQQGRD). The span at 79–105 (GAGGGGGGRGQGNPFGGGGNPFGGMGG) shows a compositional bias: gly residues. The CR-type zinc finger occupies 147–229 (GVERDVTIRR…CRGSGRVRRT (83 aa)). 8 residues coordinate Zn(2+): Cys160, Cys163, Cys177, Cys180, Cys203, Cys206, Cys217, and Cys220. 4 CXXCXGXG motif repeats span residues 160–167 (CPECDGEG), 177–184 (CSECNGSG), 203–210 (CRACGGEG), and 217–224 (CSECRGSG).

It belongs to the DnaJ family. Homodimer. It depends on Zn(2+) as a cofactor.

The protein resides in the cytoplasm. Its function is as follows. Participates actively in the response to hyperosmotic and heat shock by preventing the aggregation of stress-denatured proteins and by disaggregating proteins, also in an autonomous, DnaK-independent fashion. Unfolded proteins bind initially to DnaJ; upon interaction with the DnaJ-bound protein, DnaK hydrolyzes its bound ATP, resulting in the formation of a stable complex. GrpE releases ADP from DnaK; ATP binding to DnaK triggers the release of the substrate protein, thus completing the reaction cycle. Several rounds of ATP-dependent interactions between DnaJ, DnaK and GrpE are required for fully efficient folding. Also involved, together with DnaK and GrpE, in the DNA replication of plasmids through activation of initiation proteins. The sequence is that of Chaperone protein DnaJ from Haloferax mediterranei (strain ATCC 33500 / DSM 1411 / JCM 8866 / NBRC 14739 / NCIMB 2177 / R-4) (Halobacterium mediterranei).